The primary structure comprises 244 residues: DNA repair protein RecO (244 aa).

This sequence belongs to the RecO family.

Its function is as follows. Involved in DNA repair and RecF pathway recombination. The polypeptide is DNA repair protein RecO (Jannaschia sp. (strain CCS1)).